We begin with the raw amino-acid sequence, 275 residues long: 4-hydroxy-tetrahydrodipicolinate reductase (275 aa).

NAD(+) contacts are provided by residues 13-18 (GAAGKM) and 108-110 (GTT). Residue His164 is the Proton donor/acceptor of the active site. His165 provides a ligand contact to (S)-2,3,4,5-tetrahydrodipicolinate. Lys168 functions as the Proton donor in the catalytic mechanism. 174 to 175 (GT) serves as a coordination point for (S)-2,3,4,5-tetrahydrodipicolinate.

Belongs to the DapB family.

The protein resides in the cytoplasm. It catalyses the reaction (S)-2,3,4,5-tetrahydrodipicolinate + NAD(+) + H2O = (2S,4S)-4-hydroxy-2,3,4,5-tetrahydrodipicolinate + NADH + H(+). The enzyme catalyses (S)-2,3,4,5-tetrahydrodipicolinate + NADP(+) + H2O = (2S,4S)-4-hydroxy-2,3,4,5-tetrahydrodipicolinate + NADPH + H(+). It participates in amino-acid biosynthesis; L-lysine biosynthesis via DAP pathway; (S)-tetrahydrodipicolinate from L-aspartate: step 4/4. Functionally, catalyzes the conversion of 4-hydroxy-tetrahydrodipicolinate (HTPA) to tetrahydrodipicolinate. This is 4-hydroxy-tetrahydrodipicolinate reductase from Rippkaea orientalis (strain PCC 8801 / RF-1) (Cyanothece sp. (strain PCC 8801)).